A 474-amino-acid chain; its full sequence is tRNA-2-methylthio-N(6)-dimethylallyladenosine synthase (474 aa).

The MTTase N-terminal domain maps to 3–120; the sequence is KKLLIKTWGC…LPEMIRQSQS (118 aa). Positions 12, 49, 83, 157, 161, and 164 each coordinate [4Fe-4S] cluster. Residues 143-375 enclose the Radical SAM core domain; the sequence is KAEGATAFVS…QQQVNSQAMR (233 aa). Residues 378 to 441 enclose the TRAM domain; that stretch reads RLMLDTEQRV…ANSLRGELVR (64 aa).

Belongs to the methylthiotransferase family. MiaB subfamily. In terms of assembly, monomer. The cofactor is [4Fe-4S] cluster.

Its subcellular location is the cytoplasm. It carries out the reaction N(6)-dimethylallyladenosine(37) in tRNA + (sulfur carrier)-SH + AH2 + 2 S-adenosyl-L-methionine = 2-methylsulfanyl-N(6)-dimethylallyladenosine(37) in tRNA + (sulfur carrier)-H + 5'-deoxyadenosine + L-methionine + A + S-adenosyl-L-homocysteine + 2 H(+). Functionally, catalyzes the methylthiolation of N6-(dimethylallyl)adenosine (i(6)A), leading to the formation of 2-methylthio-N6-(dimethylallyl)adenosine (ms(2)i(6)A) at position 37 in tRNAs that read codons beginning with uridine. The sequence is that of tRNA-2-methylthio-N(6)-dimethylallyladenosine synthase from Aliivibrio fischeri (strain ATCC 700601 / ES114) (Vibrio fischeri).